The following is a 78-amino-acid chain: Acyl carrier protein (78 aa).

In terms of domain architecture, Carrier spans 2–77; that stretch reads STIEERVKKI…AAIDYILSHQ (76 aa). Position 37 is an O-(pantetheine 4'-phosphoryl)serine (Ser-37).

The protein belongs to the acyl carrier protein (ACP) family. 4'-phosphopantetheine is transferred from CoA to a specific serine of apo-ACP by AcpS. This modification is essential for activity because fatty acids are bound in thioester linkage to the sulfhydryl of the prosthetic group.

It localises to the cytoplasm. The protein operates within lipid metabolism; fatty acid biosynthesis. Carrier of the growing fatty acid chain in fatty acid biosynthesis. This is Acyl carrier protein from Tolumonas auensis (strain DSM 9187 / NBRC 110442 / TA 4).